The following is a 152-amino-acid chain: MPLYEHVFLARQDVTAQQVEELTTRFKGVIEANGGSVGKTEYWGVKSLTYRINKNRKAHFTLLNINAPAAAIQELERQQRIDEDVLRILTLRVEEHEEGPSAMLQKRDRDDRGERGDRGDRGDRGDRGFGGREDRPRRPRPTEESHGGEEEV.

The disordered stretch occupies residues 96 to 152; the sequence is HEEGPSAMLQKRDRDDRGERGDRGDRGDRGDRGFGGREDRPRRPRPTEESHGGEEEV.

The protein belongs to the bacterial ribosomal protein bS6 family.

Functionally, binds together with bS18 to 16S ribosomal RNA. This is Small ribosomal subunit protein bS6 from Xanthobacter autotrophicus (strain ATCC BAA-1158 / Py2).